The following is a 355-amino-acid chain: IGF-like family receptor 1 (355 aa).

The N-terminal stretch at 1–22 is a signal peptide; that stretch reads MGPGRCLLTALLLLALAPPPEA. At 23-163 the chain is on the extracellular side; it reads SQYCGRLEYW…PQQAWPNFLP (141 aa). The interval 120 to 147 is disordered; it reads KGHCPLTPGNPGAPSSQERSSPASSIAW. The span at 132-144 shows a compositional bias: low complexity; that stretch reads APSSQERSSPASS. Residues 164 to 184 form a helical membrane-spanning segment; the sequence is LVVLVLLLTLAVIAILLFILL. The Cytoplasmic segment spans residues 185 to 355; sequence WHLCWPKEKA…KLGSSGVCWA (171 aa).

The protein localises to the cell membrane. Probable cell membrane receptor for the IGF-like family proteins. Binds IGFL1 and IGFL3 with a higher affinity. May also bind IGFL2. The polypeptide is IGF-like family receptor 1 (IGFLR1) (Homo sapiens (Human)).